The chain runs to 658 residues: Carnitine O-palmitoyltransferase 2, mitochondrial (658 aa).

The transit peptide at M1–L25 directs the protein to the mitochondrion. Residues S26–L178 lie on the Mitochondrial matrix side of the membrane. Residue K69 is modified to N6-succinyllysine. K79 is modified (N6-acetyllysine). Residue K85 is modified to N6-succinyllysine. The segment at residues N179–N208 is an intramembrane region (note=Mitochondrial inner membrane). The Mitochondrial matrix portion of the chain corresponds to A209–S658. An N6-acetyllysine; alternate modification is found at K239. At K239 the chain carries N6-succinyllysine; alternate. The residue at position 305 (K305) is an N6-acetyllysine. H372 acts as the Proton acceptor in catalysis. K418 is subject to N6-acetyllysine; alternate. K418 bears the N6-succinyllysine; alternate mark. N6-succinyllysine occurs at positions 424 and 439. Position 452 to 464 (G452 to D464) interacts with CoA. Residues Y486, S488, and T499 each contribute to the (R)-carnitine site. N6-acetyllysine; alternate is present on residues K510 and K544. N6-succinyllysine; alternate occurs at positions 510 and 544.

It belongs to the carnitine/choline acetyltransferase family.

Its subcellular location is the mitochondrion inner membrane. The enzyme catalyses (R)-carnitine + hexadecanoyl-CoA = O-hexadecanoyl-(R)-carnitine + CoA. The catalysed reaction is octanoyl-CoA + (R)-carnitine = O-octanoyl-(R)-carnitine + CoA. It carries out the reaction decanoyl-CoA + (R)-carnitine = O-decanoyl-(R)-carnitine + CoA. It catalyses the reaction dodecanoyl-CoA + (R)-carnitine = O-dodecanoyl-R-carnitine + CoA. The enzyme catalyses tetradecanoyl-CoA + (R)-carnitine = O-tetradecanoyl-(R)-carnitine + CoA. The catalysed reaction is (R)-carnitine + octadecanoyl-CoA = O-octadecanoyl-(R)-carnitine + CoA. It carries out the reaction eicosanoyl-CoA + (R)-carnitine = O-eicosanoyl-(R)-carnitine + CoA. It catalyses the reaction (9Z)-tetradecenoyl-CoA + (R)-carnitine = O-(9Z)-tetradecenoyl-(R)-carnitine + CoA. The enzyme catalyses (5Z)-tetradecenoyl-CoA + (R)-carnitine = O-(5Z)-tetradecenoyl-(R)-carnitine + CoA. The catalysed reaction is (R)-carnitine + (9Z)-octadecenoyl-CoA = O-(9Z)-octadecenoyl-(R)-carnitine + CoA. It carries out the reaction 4,8-dimethylnonanoyl-CoA + (R)-carnitine = O-4,8-dimethylnonanoyl-(R)-carnitine + CoA. It functions in the pathway lipid metabolism; fatty acid beta-oxidation. In terms of biological role, involved in the intramitochondrial synthesis of acylcarnitines from accumulated acyl-CoA metabolites. Reconverts acylcarnitines back into the respective acyl-CoA esters that can then undergo beta-oxidation, an essential step for the mitochondrial uptake of long-chain fatty acids and their subsequent beta-oxidation in the mitochondrion. Active with medium (C8-C12) and long-chain (C14-C18) acyl-CoA esters. The protein is Carnitine O-palmitoyltransferase 2, mitochondrial (CPT2) of Macaca fascicularis (Crab-eating macaque).